Consider the following 474-residue polypeptide: Probable threonine--tRNA ligase, mitochondrial (474 aa).

Residues 1-27 (MMKLKKFQLHTPFAHSCNRVEIYTARF) constitute a mitochondrion transit peptide.

Belongs to the class-II aminoacyl-tRNA synthetase family.

The protein resides in the mitochondrion matrix. It carries out the reaction tRNA(Thr) + L-threonine + ATP = L-threonyl-tRNA(Thr) + AMP + diphosphate + H(+). The polypeptide is Probable threonine--tRNA ligase, mitochondrial (Schizosaccharomyces pombe (strain 972 / ATCC 24843) (Fission yeast)).